The sequence spans 842 residues: Circularly permutated Ras protein 1 (842 aa).

GTP-binding positions include 62 to 66 (DTAGQ), 121 to 124 (NKVD), and 181 to 188 (GGGGVGKS). Residues 253–274 (SGKDKQPSPQQAASPSTIDRTG) are disordered. Residues 259 to 274 (PSPQQAASPSTIDRTG) show a composition bias toward polar residues. The VWFA domain occupies 377–627 (IIIYCIDVSG…TQNPMIATDV (251 aa)).

It belongs to the small GTPase superfamily. CpRas family.

This is Circularly permutated Ras protein 1 (cpras1) from Dictyostelium discoideum (Social amoeba).